We begin with the raw amino-acid sequence, 352 residues long: Glycerol-3-phosphate dehydrogenase [NAD(P)+] (352 aa).

Residues tryptophan 11, arginine 37, and lysine 112 each coordinate NADPH. Positions 112, 153, and 155 each coordinate sn-glycerol 3-phosphate. Alanine 157 contributes to the NADPH binding site. Residues lysine 208, aspartate 261, serine 271, arginine 272, and asparagine 273 each contribute to the sn-glycerol 3-phosphate site. The Proton acceptor role is filled by lysine 208. Arginine 272 is a binding site for NADPH. Residues valine 296 and glutamate 298 each contribute to the NADPH site.

Belongs to the NAD-dependent glycerol-3-phosphate dehydrogenase family.

It localises to the cytoplasm. It carries out the reaction sn-glycerol 3-phosphate + NAD(+) = dihydroxyacetone phosphate + NADH + H(+). The enzyme catalyses sn-glycerol 3-phosphate + NADP(+) = dihydroxyacetone phosphate + NADPH + H(+). It participates in membrane lipid metabolism; glycerophospholipid metabolism. In terms of biological role, catalyzes the reduction of the glycolytic intermediate dihydroxyacetone phosphate (DHAP) to sn-glycerol 3-phosphate (G3P), the key precursor for phospholipid synthesis. This Polaromonas naphthalenivorans (strain CJ2) protein is Glycerol-3-phosphate dehydrogenase [NAD(P)+].